The chain runs to 483 residues: UDP-N-acetylmuramoyl-L-alanyl-D-glutamate--L-lysine ligase (483 aa).

UDP-N-acetyl-alpha-D-muramoyl-L-alanyl-D-glutamate is bound at residue Ser44. 120 to 126 (GTKGKTT) serves as a coordination point for ATP. UDP-N-acetyl-alpha-D-muramoyl-L-alanyl-D-glutamate contacts are provided by residues 162–163 (TT), Ser189, and Arg197. Residue Lys231 is modified to N6-carboxylysine. The short motif at 406–409 (DDPN) is the L-lysine recognition motif element.

It belongs to the MurCDEF family. MurE subfamily. In terms of processing, carboxylation is probably crucial for Mg(2+) binding and, consequently, for the gamma-phosphate positioning of ATP.

It localises to the cytoplasm. The catalysed reaction is UDP-N-acetyl-alpha-D-muramoyl-L-alanyl-D-glutamate + L-lysine + ATP = UDP-N-acetyl-alpha-D-muramoyl-L-alanyl-gamma-D-glutamyl-L-lysine + ADP + phosphate + H(+). The protein operates within cell wall biogenesis; peptidoglycan biosynthesis. Catalyzes the addition of L-lysine to the nucleotide precursor UDP-N-acetylmuramoyl-L-alanyl-D-glutamate (UMAG) in the biosynthesis of bacterial cell-wall peptidoglycan. The chain is UDP-N-acetylmuramoyl-L-alanyl-D-glutamate--L-lysine ligase from Streptococcus mutans serotype c (strain ATCC 700610 / UA159).